Here is a 145-residue protein sequence, read N- to C-terminus: UPF0260 protein VV2402 (145 aa).

This sequence belongs to the UPF0260 family.

The sequence is that of UPF0260 protein VV2402 from Vibrio vulnificus (strain YJ016).